The primary structure comprises 621 residues: Glutathione-regulated potassium-efflux system protein KefC (621 aa).

The next 13 helical transmembrane spans lie at 4 to 24 (HTLI…PIAV), 26 to 46 (LGLG…PWAL), 54 to 74 (AILH…GLEL), 90 to 110 (GALQ…LLGL), 114 to 134 (VAEL…MQAM), 149 to 169 (FAVL…IPLL), 178 to 198 (LMAF…VVVL), 218 to 237 (VFSA…LEEV), 238 to 257 (GLSM…SSEY), 270 to 290 (GLLL…GTLV), 294 to 314 (LRIV…LWLI), 326 to 346 (RWFA…FGAA), and 359 to 379 (ALTL…VLLT). The 120-residue stretch at 399–518 (QPRVIVAGFG…AGVEAPERET (120 aa)) folds into the RCK N-terminal domain. Residues 598 to 621 (GWQGTEEGRHTGDIADEPENKPSA) form a disordered region.

Belongs to the monovalent cation:proton antiporter 2 (CPA2) transporter (TC 2.A.37) family. KefC subfamily. As to quaternary structure, homodimer. Interacts with the regulatory subunit KefF.

It localises to the cell inner membrane. In terms of biological role, pore-forming subunit of a potassium efflux system that confers protection against electrophiles. Catalyzes K(+)/H(+) antiport. The chain is Glutathione-regulated potassium-efflux system protein KefC from Klebsiella pneumoniae subsp. pneumoniae (strain ATCC 700721 / MGH 78578).